The chain runs to 218 residues: Epoxyqueuosine reductase QueH (218 aa).

Residues Cys-22, Cys-23, Cys-101, and Cys-104 each coordinate [4Fe-4S] cluster. A disulfide bridge links Cys-184 with Cys-186.

The protein belongs to the QueH family.

It catalyses the reaction epoxyqueuosine(34) in tRNA + AH2 = queuosine(34) in tRNA + A + H2O. Its pathway is tRNA modification; tRNA-queuosine biosynthesis. In terms of biological role, catalyzes the conversion of epoxyqueuosine (oQ) to queuosine (Q), which is a hypermodified base found in the wobble positions of tRNA(Asp), tRNA(Asn), tRNA(His) and tRNA(Tyr). This is Epoxyqueuosine reductase QueH from Acinetobacter baylyi (strain ATCC 33305 / BD413 / ADP1).